Reading from the N-terminus, the 201-residue chain is Recombination protein RecR (201 aa).

The C4-type zinc-finger motif lies at 59–74 (CEICGNMDTENMCRIC). The 96-residue stretch at 82–177 (SIIAIVETVA…KISRLASGIP (96 aa)) folds into the Toprim domain.

Belongs to the RecR family.

In terms of biological role, may play a role in DNA repair. It seems to be involved in an RecBC-independent recombinational process of DNA repair. It may act with RecF and RecO. This Rickettsia conorii (strain ATCC VR-613 / Malish 7) protein is Recombination protein RecR.